The sequence spans 188 residues: Type II secretion system protein H (188 aa).

Residues 1-10 (MKRSTRKQQG) constitute a propeptide, leader sequence. The residue at position 11 (F11) is an N-methylphenylalanine. A helical membrane pass occupies residues 13-35 (LLEMMLVVLLAGIAAGMVVMAFP).

This sequence belongs to the GSP H family. In terms of assembly, type II secretion is composed of four main components: the outer membrane complex, the inner membrane complex, the cytoplasmic secretion ATPase and the periplasm-spanning pseudopilus. Interacts with core component OutG. Cleaved by prepilin peptidase. Post-translationally, methylated by prepilin peptidase at the amino group of the N-terminal phenylalanine once the leader sequence is cleaved by prepilin peptidase.

It is found in the cell inner membrane. Functionally, component of the type II secretion system required for the energy-dependent secretion of extracellular factors such as proteases and toxins from the periplasm. Part of the pseudopilus tip complex that is critical for the recognition and binding of secretion substrates. The polypeptide is Type II secretion system protein H (outH) (Pectobacterium carotovorum subsp. carotovorum (Erwinia carotovora subsp. carotovora)).